Here is a 1020-residue protein sequence, read N- to C-terminus: MGRGAGREYSPAATTAENGGGKKKQKEKELDELKKEVAMDDHKLSLDELGRKYQVDLSKGLTNQRAQDVLARDGPNALTPPPTTPEWVKFCRQLFGGFSILLWIGAILCFLAYGIQAAMEDEPSNDNLYLGVVLAAVVIVTGCFSYYQEAKSSKIMDSFKNMVPQQALVIREGEKMQINAEEVVVGDLVEVKGGDRVPADLRIISSHGCKVDNSSLTGESEPQTRSPEFTHENPLETRNICFFSTNCVEGTARGIVIATGDRTVMGRIATLASGLEVGRTPIAMEIEHFIQLITGVAVFLGVSFFVLSLILGYSWLEAVIFLIGIIVANVPEGLLATVTVCLTLTAKRMARKNCLVKNLEAVETLGSTSTICSDKTGTLTQNRMTVAHMWFDNQIHEADTTEDQSGATFDKRSPTWTALSRIAGLCNRAVFKAGQENISVSKRDTAGDASESALLKCIELSCGSVRKMRDRNPKVAEIPFNSTNKYQLSIHEREDSPQSHVLVMKGAPERILDRCSTILVQGKEIPLDKEMQDAFQNAYMELGGLGERVLGFCQLNLPSGKFPRGFKFDTDELNFPTEKLCFVGLMSMIDPPRAAVPDAVGKCRSAGIKVIMVTGDHPITAKAIAKGVGIISEGNETVEDIAARLNIPMSQVNPREAKACVVHGSDLKDMTSEQLDEILKNHTEIVFARTSPQQKLIIVEGCQRQGAIVAVTGDGVNDSPALKKADIGIAMGISGSDVSKQAADMILLDDNFASIVTGVEEGRLIFDNLKKSIAYTLTSNIPEITPFLLFIIANIPLPLGTVTILCIDLGTDMVPAISLAYEAAESDIMKRQPRNSQTDKLVNERLISMAYGQIGMIQALGGFFTYFVILAENGFLPSRLLGIRLDWDDRTMNDLEDSYGQEWTYEQRKVVEFTCHTAFFASIVVVQWADLIICKTRRNSVFQQGMKNKILIFGLLEETALAAFLSYCPGMGVALRMYPLKVTWWFCAFPYSLLIFIYDEVRKLILRRYPGGWVEKETYY.

Positions 1-5 are excised as a propeptide; that stretch reads MGRGA. The tract at residues 1 to 31 is disordered; it reads MGRGAGREYSPAATTAENGGGKKKQKEKELD. The Cytoplasmic portion of the chain corresponds to 6–85; sequence GREYSPAATT…NALTPPPTTP (80 aa). Ser10 is modified (phosphoserine). The interaction with phosphoinositide-3 kinase stretch occupies residues 80-82; the sequence is PPP. A helical transmembrane segment spans residues 86-106; sequence EWVKFCRQLFGGFSILLWIGA. Topologically, residues 107 to 129 are extracellular; that stretch reads ILCFLAYGIQAAMEDEPSNDNLY. A helical membrane pass occupies residues 130–150; it reads LGVVLAAVVIVTGCFSYYQEA. The Cytoplasmic portion of the chain corresponds to 151 to 286; sequence KSSKIMDSFK…VGRTPIAMEI (136 aa). Residues 212–227 are compositionally biased toward polar residues; it reads DNSSLTGESEPQTRSP. Positions 212-231 are disordered; it reads DNSSLTGESEPQTRSPEFTH. The chain crosses the membrane as a helical span at residues 287-306; the sequence is EHFIQLITGVAVFLGVSFFV. Residues 307–318 lie on the Extracellular side of the membrane; sequence LSLILGYSWLEA. The helical transmembrane segment at 319–336 threads the bilayer; it reads VIFLIGIIVANVPEGLLA. At 337–769 the chain is on the cytoplasmic side; sequence TVTVCLTLTA…EEGRLIFDNL (433 aa). The 4-aspartylphosphate intermediate role is filled by Asp374. Phosphoserine occurs at positions 439, 450, 496, and 559. Position 570 is a phosphothreonine (Thr570). Ser587 and Ser672 each carry phosphoserine. The Mg(2+) site is built by Asp714 and Asp718. The chain crosses the membrane as a helical span at residues 770–789; the sequence is KKSIAYTLTSNIPEITPFLL. Residues 790 to 799 lie on the Extracellular side of the membrane; it reads FIIANIPLPL. Residues 800–820 traverse the membrane as a helical segment; it reads GTVTILCIDLGTDMVPAISLA. At 821 to 840 the chain is on the cytoplasmic side; the sequence is YEAAESDIMKRQPRNSQTDK. Ser826 carries the post-translational modification Phosphoserine. Residues 841-863 form a helical membrane-spanning segment; it reads LVNERLISMAYGQIGMIQALGGF. Residues 864-915 are Extracellular-facing; the sequence is FTYFVILAENGFLPSRLLGIRLDWDDRTMNDLEDSYGQEWTYEQRKVVEFTC. The chain crosses the membrane as a helical span at residues 916–935; it reads HTAFFASIVVVQWADLIICK. Residues 936–948 are Cytoplasmic-facing; it reads TRRNSVFQQGMKN. Ser940 is modified (phosphoserine; by PKA). Residues 949-967 form a helical membrane-spanning segment; sequence KILIFGLLEETALAAFLSY. The Extracellular portion of the chain corresponds to 968–982; it reads CPGMGVALRMYPLKV. Residues 983-1003 traverse the membrane as a helical segment; the sequence is TWWFCAFPYSLLIFIYDEVRK. Topologically, residues 1004-1020 are cytoplasmic; it reads LILRRYPGGWVEKETYY.

The protein belongs to the cation transport ATPase (P-type) (TC 3.A.3) family. Type IIC subfamily. In terms of assembly, the sodium/potassium-transporting ATPase is composed of a catalytic alpha subunit, an auxiliary non-catalytic beta subunit and an additional regulatory subunit. Interacts with regulatory subunit FXYD1.

The protein localises to the membrane. It is found in the cell membrane. It catalyses the reaction K(+)(out) + Na(+)(in) + ATP + H2O = K(+)(in) + Na(+)(out) + ADP + phosphate + H(+). In terms of biological role, this is the catalytic component of the active enzyme, which catalyzes the hydrolysis of ATP coupled with the exchange of sodium and potassium ions across the plasma membrane. This action creates the electrochemical gradient of sodium and potassium, providing the energy for active transport of various nutrients. In Homo sapiens (Human), this protein is Sodium/potassium-transporting ATPase subunit alpha-2 (ATP1A2).